The chain runs to 1122 residues: Telomerase reverse transcriptase (1122 aa).

The segment at 1–239 is RNA-interacting domain 1; that stretch reads MTRAPRCPAV…TKRHLSLTST (239 aa). The tract at residues 58–205 is GQ motif; that stretch reads MHWGSQPPPA…RPVGRNFTNL (148 aa). Positions 137–141 are required for regulating specificity for telomeric DNA and for processivity for primer elongation; sequence WMLLL. Residues 213–296 form a disordered region; sequence SSSRQEAPKP…KDLSSKGKVS (84 aa). Positions 240-328 are linker; it reads SVPSAKKARC…PRQNAFQLRP (89 aa). Over residues 284–295 the composition is skewed to basic and acidic residues; the sequence is TAEKDLSSKGKV. The segment at 306–528 is required for oligomerization; that stretch reads CKHKPSSTSL…VPAAEHRLRE (223 aa). The segment at 329–540 is RNA-interacting domain 2; the sequence is FIETRHFLYS…LATFLFWLMD (212 aa). A TFLY; involved in RNA binding motif is present at residues 332–337; the sequence is TRHFLY. The segment at 381-511 is QFP motif; that stretch reads LCRTHRLSRR…MKVEDCHWLR (131 aa). The interval 402–422 is CP motif; it reads LVNHAECQYVRLLRSHCRFRT. Residue Ser-447 is modified to Phosphoserine; by DYRK2. Positions 595–928 constitute a Reverse transcriptase domain; that stretch reads EVRHHQDTWL…CLFPWCGLLL (334 aa). The residue at position 697 (Tyr-697) is a Phosphotyrosine; by SRC-type Tyr-kinases. Positions 702, 861, and 862 each coordinate Mg(2+). Residues 907–921 are required for oligomerization; sequence LGGAAPYQLPAHCLF. Residues 923–927 form a primer grip sequence region; it reads WCGLL. The CTE stretch occupies residues 929–1122; it reads DTQTLEVFCD…LSTDFQTILD (194 aa).

Belongs to the reverse transcriptase family. Telomerase subfamily. In terms of assembly, catalytic component of the telomerase holoenzyme complex composed of one molecule of TERT, one molecule of WRAP53/TCAB1, two molecules of H/ACA ribonucleoprotein complex subunits DKC1, NOP10, NHP2 and GAR1, and a telomerase RNA template component (TERC). The telomerase holoenzyme complex is associated with TEP1, SMG6/EST1A and POT1. The molecular chaperone HSP90/P23 complex is required for correct assembly and stabilization of the active telomerase. Interacts directly with HSP90A and PTGES3. Interacts with HSPA1A; the interaction occurs in the absence of TERC and dissociates once the complex has formed. Interacts with RAN; the interaction promotes nuclear export of TERT. Interacts with XPO1. Interacts with PTPN11; the interaction retains TERT in the nucleus. Interacts with NCL (via RRM1 and C-terminal RRM4/Arg/Gly-rich domains); the interaction is important for nucleolar localization of TERT. Interacts with SMARCA4 (via the bromodomain); the interaction regulates Wnt-mediated signaling. Interacts with MCRS1 (isoform MCRS2); the interaction inhibits in vitro telomerase activity. Interacts with PIF1; the interaction has no effect on the elongation activity of TERT. Interacts with PML; the interaction recruits TERT to PML bodies and inhibits telomerase activity. Interacts with GNL3L. Interacts with isoform 1 and isoform 2 of NVL. Interacts with DHX36. Interacts with ATF7. In terms of processing, phosphorylation at Tyr-697 under oxidative stress leads to translocation of TERT to the cytoplasm and reduces its antiapoptotic activity. Dephosphorylated by SHP2/PTPN11 leading to nuclear retention. Phosphorylation by the AKT pathway promotes nuclear location. Phosphorylation at the G2/M phase at Ser-447 by DYRK2 promotes ubiquitination by the EDVP complex and degradation. Post-translationally, ubiquitinated by the EDVP complex, a E3 ligase complex following phosphorylation at Ser-447 by DYRK2. Ubiquitinated leads to proteasomal degradation. In terms of tissue distribution, high activity in intestine, liver and testis, moderate in lung, very low in muscle, heart and brain.

Its subcellular location is the nucleus. The protein resides in the nucleolus. The protein localises to the nucleoplasm. It localises to the chromosome. It is found in the telomere. Its subcellular location is the cytoplasm. The protein resides in the PML body. It catalyses the reaction DNA(n) + a 2'-deoxyribonucleoside 5'-triphosphate = DNA(n+1) + diphosphate. Its function is as follows. Telomerase is a ribonucleoprotein enzyme essential for the replication of chromosome termini in most eukaryotes. Active in progenitor and cancer cells. Inactive, or very low activity, in normal somatic cells. Catalytic component of the teleromerase holoenzyme complex whose main activity is the elongation of telomeres by acting as a reverse transcriptase that adds simple sequence repeats to chromosome ends by copying a template sequence within the RNA component of the enzyme. Catalyzes the RNA-dependent extension of 3'-chromosomal termini with the 6-nucleotide telomeric repeat unit, 5'-TTAGGG-3'. The catalytic cycle involves primer binding, primer extension and release of product once the template boundary has been reached or nascent product translocation followed by further extension. More active on substrates containing 2 or 3 telomeric repeats. Telomerase activity is regulated by a number of factors including telomerase complex-associated proteins, chaperones and polypeptide modifiers. Modulates Wnt signaling. Plays important roles in aging and antiapoptosis. This is Telomerase reverse transcriptase (Tert) from Mus musculus (Mouse).